A 394-amino-acid chain; its full sequence is Probable acetyl-CoA acyltransferase (394 aa).

The active-site Acyl-thioester intermediate is the cysteine 88. Active-site proton acceptor residues include histidine 349 and cysteine 378.

This sequence belongs to the thiolase-like superfamily. Thiolase family.

The protein resides in the cytoplasm. It carries out the reaction 2 acetyl-CoA = acetoacetyl-CoA + CoA. The chain is Probable acetyl-CoA acyltransferase from Staphylococcus epidermidis (strain ATCC 35984 / DSM 28319 / BCRC 17069 / CCUG 31568 / BM 3577 / RP62A).